Consider the following 321-residue polypeptide: Methionyl-tRNA formyltransferase (321 aa).

111-114 (SLLP) lines the (6S)-5,6,7,8-tetrahydrofolate pocket.

This sequence belongs to the Fmt family.

It carries out the reaction L-methionyl-tRNA(fMet) + (6R)-10-formyltetrahydrofolate = N-formyl-L-methionyl-tRNA(fMet) + (6S)-5,6,7,8-tetrahydrofolate + H(+). Its function is as follows. Attaches a formyl group to the free amino group of methionyl-tRNA(fMet). The formyl group appears to play a dual role in the initiator identity of N-formylmethionyl-tRNA by promoting its recognition by IF2 and preventing the misappropriation of this tRNA by the elongation apparatus. The sequence is that of Methionyl-tRNA formyltransferase from Bifidobacterium animalis subsp. lactis (strain AD011).